We begin with the raw amino-acid sequence, 325 residues long: MVTEHIFDFEWRPLQNYLRDRDIAIPPFAAEQESRSDALYNWIVSKGYSGKEGLNLGTYYHISDYGVIGLALLCAENVGDILKVIRAYVKLFNRDIANVGVKPRENYEVEIHISVNFKPEWNDASRQFHVNVIASATYKLIMDLLGNDFPISALTVPVHGADKTIYEGFFSLPVKHEGNDIIFSFPAHQLNRTLATANPAVFQSALTMAGESFNALLEVEMGGLRQRIELFLDSIPDQYPSLVTTAKYLRMNERTVRRRLADEGCTYRQIVDKARKERAIALLLNSSIPVDRISDILGYSETASFRHAFRRWTGQSTTEFRNSFH.

Positions 226 to 323 (QRIELFLDSI…GQSTTEFRNS (98 aa)) constitute an HTH araC/xylS-type domain. 2 DNA-binding regions (H-T-H motif) span residues 243–264 (VTTA…ADEG) and 290–313 (VDRI…RRWT).

Transcriptional regulator involved in both the repression (at least 99 genes, such as mexR and algU) and in the activation (at least 203 genes, such as mvfR, rsaL, vqsR and rpoS) of regulatory or putative regulatory proteins which are implicated in quorum sensing, virulence and multidrug resistance. This is HTH-type transcriptional regulator VqsM (vqsM) from Pseudomonas aeruginosa (strain ATCC 15692 / DSM 22644 / CIP 104116 / JCM 14847 / LMG 12228 / 1C / PRS 101 / PAO1).